The chain runs to 677 residues: UPF0313 protein RPA0679 (677 aa).

Positions 335–601 (AWDMIKTSVT…VEAIKGLRQR (267 aa)) constitute a Radical SAM core domain. Residues C349, C353, and C356 each coordinate [4Fe-4S] cluster. Positions 635–677 (RPDQLVPAHQPPGTGKAAGTRRPVRGDGPKPQRFTTKGVRLVK) are disordered.

This sequence belongs to the UPF0313 family. The cofactor is [4Fe-4S] cluster.

The chain is UPF0313 protein RPA0679 from Rhodopseudomonas palustris (strain ATCC BAA-98 / CGA009).